A 430-amino-acid chain; its full sequence is Rosmarinate synthase (430 aa).

His-152 functions as the Proton acceptor in the catalytic mechanism. Residues 178-210 are disordered; sequence TPLPHFDRSSLSARNPPQPQFSHAEYQPPPTLE. The active-site Proton acceptor is the Asp-377.

This sequence belongs to the plant acyltransferase family.

It carries out the reaction (2R)-3-(3,4-dihydroxyphenyl)lactate + (E)-caffeoyl-CoA = (R)-rosmarinate + CoA. In terms of biological role, involved in the biosynthesis of rosmarinic acid, a compound with antiviral, antimicrobial and anti-inflammatory activities. Can use 4-coumaroyl- and caffeoyl-CoA as hydroxycinnamoyl donors and 4-Hydroxyphenyllactate and 3.4-Dihydroxyphenyllactate, but not shikimate or quinate, as hydroxycinnamoyl acceptors. Can also putatively catalyze amide formation with D-amino acids as acceptors. The protein is Rosmarinate synthase (RAS) of Plectranthus scutellarioides (Coleus).